The following is an 892-amino-acid chain: Alpha-actinin-1 (892 aa).

Met1 bears the N-acetylmethionine mark. The tract at residues 1-247 (MDHYDSQQTN…IMTYVSSFYH (247 aa)) is actin-binding. A Phosphoserine modification is found at Ser6. Tyr12 is modified (phosphotyrosine; by FAK1). 2 consecutive Calponin-homology (CH) domains span residues 31–135 (KQQR…LRFA) and 144–250 (TSAK…HAFS). Residues Lys95 and Lys195 each carry the N6-acetyllysine modification. Spectrin repeat units lie at residues 274-384 (QLME…WLLN), 394-499 (HLAE…ALER), 509-620 (QLYL…ALTE), and 630-733 (RLRK…EVEN). Residues 274 to 733 (QLMEDYEKLA…IARTINEVEN (460 aa)) form an interaction with DDN region. Position 471 is a phosphoserine (Ser471). At Lys676 the chain carries N6-acetyllysine. Residue Ser677 is modified to Phosphoserine. EF-hand domains are found at residues 746–781 (EQMN…LGYD) and 787–822 (QGEA…ETAD). Asp759, Asp761, Ser763, Thr765, and Glu770 together coordinate Ca(2+). The residue at position 890 (Ser890) is a Phosphoserine.

This sequence belongs to the alpha-actinin family. As to quaternary structure, homodimer; antiparallel. Interacts with MYOZ2, TTID and LPP. Interacts with DDN. Interacts with PSD. Interacts with MICALL2. Interacts with DNM2 and CTTN. Interacts with PDLIM1. Interacts with PDLIM2. Interacts with PDLIM4 (via PDZ domain). Interacts with IGSF8.

Its subcellular location is the cytoplasm. The protein resides in the cytoskeleton. It is found in the myofibril. It localises to the sarcomere. The protein localises to the z line. Its subcellular location is the cell membrane. The protein resides in the cell junction. It is found in the cell projection. It localises to the ruffle. Its function is as follows. F-actin cross-linking protein which is thought to anchor actin to a variety of intracellular structures. Association with IGSF8 regulates the immune synapse formation and is required for efficient T-cell activation. The sequence is that of Alpha-actinin-1 (ACTN1) from Bos taurus (Bovine).